Reading from the N-terminus, the 41-residue chain is Photosystem I reaction center subunit IX (41 aa).

A helical transmembrane segment spans residues 7-27 (YLSTAPVVAAAWFTFTAGLLI).

Belongs to the PsaJ family.

It is found in the plastid. It localises to the chloroplast thylakoid membrane. Functionally, may help in the organization of the PsaE and PsaF subunits. The sequence is that of Photosystem I reaction center subunit IX from Oltmannsiellopsis viridis (Marine flagellate).